Consider the following 401-residue polypeptide: Beta-lactamase (401 aa).

The first 39 residues, 1–39 (MKLFTSTLTAKKSSTHKPLISLALSVLISTLLISETAQA), serve as a signal peptide directing secretion. S102 acts as the Acyl-ester intermediate in catalysis. The active-site Proton acceptor is Y188. Position 353 to 355 (353 to 355 (KTG)) interacts with substrate.

It belongs to the class-C beta-lactamase family.

The protein localises to the secreted. It carries out the reaction a beta-lactam + H2O = a substituted beta-amino acid. In terms of biological role, this protein is a serine beta-lactamase with a substrate specificity for cephalosporins. The sequence is that of Beta-lactamase (ampC) from Psychrobacter immobilis.